A 115-amino-acid polypeptide reads, in one-letter code: Large ribosomal subunit protein uL24 (115 aa).

It belongs to the universal ribosomal protein uL24 family. Part of the 50S ribosomal subunit.

Its function is as follows. One of two assembly initiator proteins, it binds directly to the 5'-end of the 23S rRNA, where it nucleates assembly of the 50S subunit. In terms of biological role, one of the proteins that surrounds the polypeptide exit tunnel on the outside of the subunit. The sequence is that of Large ribosomal subunit protein uL24 from Phytoplasma mali (strain AT).